The sequence spans 194 residues: dCTP deaminase (194 aa).

DCTP is bound by residues 110–115 (RSSLAR), aspartate 128, 136–138 (VLE), tyrosine 171, lysine 178, and glutamine 182. Glutamate 138 serves as the catalytic Proton donor/acceptor.

It belongs to the dCTP deaminase family. Homotrimer.

It carries out the reaction dCTP + H2O + H(+) = dUTP + NH4(+). It functions in the pathway pyrimidine metabolism; dUMP biosynthesis; dUMP from dCTP (dUTP route): step 1/2. Catalyzes the deamination of dCTP to dUTP. The polypeptide is dCTP deaminase (Psychromonas ingrahamii (strain DSM 17664 / CCUG 51855 / 37)).